Reading from the N-terminus, the 116-residue chain is Large ribosomal subunit protein bL19 (116 aa).

It belongs to the bacterial ribosomal protein bL19 family.

This protein is located at the 30S-50S ribosomal subunit interface and may play a role in the structure and function of the aminoacyl-tRNA binding site. The polypeptide is Large ribosomal subunit protein bL19 (Pseudomonas fluorescens (strain Pf0-1)).